We begin with the raw amino-acid sequence, 143 residues long: Small ribosomal subunit protein uS9 (143 aa).

The interval 123-143 is disordered; the sequence is RPEPKKFGGRGARARFQKSYR. Residues 134–143 are compositionally biased toward basic residues; it reads ARARFQKSYR.

This sequence belongs to the universal ribosomal protein uS9 family.

This is Small ribosomal subunit protein uS9 (RPS16) from Eremothecium gossypii (strain ATCC 10895 / CBS 109.51 / FGSC 9923 / NRRL Y-1056) (Yeast).